A 337-amino-acid chain; its full sequence is Glyceraldehyde-3-phosphate dehydrogenase (337 aa).

NAD(+)-binding positions include 12-13 (RI), Asp34, and Lys79. D-glyceraldehyde 3-phosphate is bound by residues 150-152 (SCT), Thr181, 210-211 (TG), and Arg233. Cys151 (nucleophile) is an active-site residue. Asn315 is an NAD(+) binding site.

This sequence belongs to the glyceraldehyde-3-phosphate dehydrogenase family. Homotetramer.

It is found in the cytoplasm. The enzyme catalyses D-glyceraldehyde 3-phosphate + phosphate + NAD(+) = (2R)-3-phospho-glyceroyl phosphate + NADH + H(+). It functions in the pathway carbohydrate degradation; glycolysis; pyruvate from D-glyceraldehyde 3-phosphate: step 1/5. This chain is Glyceraldehyde-3-phosphate dehydrogenase (GPD), found in Schizophyllum commune (Split gill fungus).